We begin with the raw amino-acid sequence, 649 residues long: Ubiquitin-associated and SH3 domain-containing protein B (649 aa).

S20 carries the post-translational modification Phosphoserine. T23 is subject to Phosphothreonine. The 50-residue stretch at 27–76 (NRQQRPGTIKHGSALDVLLSMGFPRARAQKALASTGGRSVQAACDWLFSH) folds into the UBA domain. The SH3 domain maps to 254–319 (ANHETLQVIY…PENYITKADE (66 aa)). The interval 380 to 649 (GPQKRCLFVC…FNWRETLLQE (270 aa)) is protein tyrosine phosphatase. Residue R390 is part of the active site. Residue H391 is the Tele-phosphohistidine intermediate of the active site. The active site involves H576.

As to quaternary structure, homodimer. Interacts with JAK2 (in vitro). Interacts with CBL. Part of a complex containing CBL and activated EGFR. Interacts with ubiquitin and with mono-ubiquitinated proteins. Interacts with ZAP70 (ubiquitinated form).

The protein resides in the cytoplasm. Its subcellular location is the nucleus. The enzyme catalyses O-phospho-L-tyrosyl-[protein] + H2O = L-tyrosyl-[protein] + phosphate. Its function is as follows. Interferes with CBL-mediated down-regulation and degradation of receptor-type tyrosine kinases. Promotes accumulation of activated target receptors, such as T-cell receptors and EGFR, on the cell surface. Exhibits tyrosine phosphatase activity toward several substrates including EGFR, FAK, SYK, and ZAP70. Down-regulates proteins that are dually modified by both protein tyrosine phosphorylation and ubiquitination. This is Ubiquitin-associated and SH3 domain-containing protein B (UBASH3B) from Homo sapiens (Human).